Here is a 637-residue protein sequence, read N- to C-terminus: MSQQETHGFQTEVKQLLQLMIHSLYSNKEIFLRELVSNAADAADKLRYLALTDDALYEGDGELRVRVSTDKEKGTVTISDNGIGMTRDSVIEHLGTIAKSGTKEFFNNLSGEANKDSQLIGQFGVGFYSAFIVAKKVTVRTRAAGHPANEGVLWESEGEGSFNVETITKNSRGTEIVLHLRDEEKEFADDWRLRSIITKYSDHISVPVEMFEAGKDAQEGEDGETIAAVEGQWKPMNKATALWTRNKSDISDEEYQEFYKHISHDYTDALKWSHNRVEGKQEYTSLLYIPAKAPWDMWNRDHKHGLKLFVQRVFIMDEAEQFLPNYLRFVRGLLDSNDLPLNVSREILQDNQVTTAMRVGVTKRVLGMLEKLAKDEPGQYQSFWAEFGQVLKEGPAEDFANKERIAGLLRFASTHEGSAATTVSLEDYISRMKEGQDKIYYIVADSHEAAANSPHLELLRKKGIEVLLMSERIDEWLINHLTEFKGKKLHSVTRGDLELGELEDAADKEAKDKITEEAKGLVERMKAALGAKVSEVKVTTRLTDTPACVVAGEGEMSTQMIKLMQAAGQAVPESKPTFEINPNHPLVARLNDEADEQLFADWASLLLQQAQLSEKGSLADPSAFIKLMNQMLLANAK.

The segment at 1-345 is a; substrate-binding; it reads MSQQETHGFQ…SNDLPLNVSR (345 aa). The tract at residues 346–562 is b; it reads EILQDNQVTT…EGEMSTQMIK (217 aa). Residues 563-637 are c; that stretch reads LMQAAGQAVP…MNQMLLANAK (75 aa).

Belongs to the heat shock protein 90 family. Homodimer.

The protein resides in the cytoplasm. In terms of biological role, molecular chaperone. Has ATPase activity. The polypeptide is Chaperone protein HtpG (Shewanella denitrificans (strain OS217 / ATCC BAA-1090 / DSM 15013)).